We begin with the raw amino-acid sequence, 421 residues long: Testin (421 aa).

The PET domain maps to 92–199; sequence MILTNPVAAK…GDVKLPCEMD (108 aa). Positions 133–164 are disordered; sequence EKQPVAGSEGAQYRKKQLAKQLPAHDQDPSKC. Positions 155 to 164 are enriched in basic and acidic residues; it reads PAHDQDPSKC. LIM zinc-binding domains are found at residues 234 to 297, 299 to 359, and 362 to 421; these read YSCY…CDSE, PRCA…NHAV, and QGCH…KMMS.

It belongs to the prickle / espinas / testin family. In terms of assembly, interacts via LIM domain 1 with ZYX. Interacts (via LIM domain 3) with ENAH and VASP. Interacts with ALKBH4, talin, actin, alpha-actinin, GRIP1 and PXN. Interacts (via LIM domain 2) with ACTL7A (via N-terminus). Heterodimer with ACTL7A; the heterodimer interacts with ENAH to form a heterotrimer.

Its subcellular location is the cytoplasm. The protein localises to the cell junction. It is found in the focal adhesion. Its function is as follows. Scaffold protein that may play a role in cell adhesion, cell spreading and in the reorganization of the actin cytoskeleton. Plays a role in the regulation of cell proliferation. May act as a tumor suppressor. The sequence is that of Testin (TES) from Aotus nancymaae (Ma's night monkey).